Reading from the N-terminus, the 1209-residue chain is MIPPKPRESQWTDEQWQAIYATGQHTLVAAAAGSGKTAVLVERIIQKILHKERPIDVDRLLVVTFTNAAAAEMRQRIGEALERALEKEPHSLHLRRQLSLLQKASISTIHSFCLDVIRKYYYVIGIDPVFRIADEGEMALLKEEVLETLFEQYYAENDEPFLTVVDRYTSDRTDADLQTLILRLYEFSRSHPNPSGWLQQIVHMYDVEEGARIDDLPYAHYLFQAVDLALEAAEYRLAQALQKTKEPGGPDYLYDTLASDEQVIAKLKEARHESWQQLHEAMKNVSFATAKRKPKDGAYDEQLVEDVKKLRDQVKKEISSITEELFSFQPVTYVRHLHEMKPIVTTIVQMVQRFAHLLQAKKDEKGIVDFSDLEHYCLRILRAPSLEHELKPSEAALYYRAQFAEVLVDEYQDTNMVQESILRLVSNDDEATGNMFMVGDVKQSIYGFRLAEPSLFLQKYNRFTKDGDGGLRIDLAKNFRSRKEILDGTNFIFRQLMTETVGDMRYDDDAALRFGAQDYPDKQIPVECVWINEAKEESDEEEQEDVTAVQLEARWIAKKIKQLLAEPFFVYDRRLKGERRLMYRDIVILCRSMSSASAMLEEFRKQNVPVYAELSSGYFSATEVSIMLSLLKVIDNPYQDIPLAAVLRSPIVGLDEEALARIRLAKKDGAFYEALCAFVQEPHDDELHEKMKRWLASLSEWRTAARQKPLADLIWQLYRETNFYDYVGGMPGGKQRQANLRALYDRAKQYEQTSFRGIFRFLRFIERLKEREDDFGAARSLTEQEDVVRMMTIHKSKGLEFPVVFLAGAAKSFNMQDLRSDYVLDKDFGLGMRFVHPTWRASYPTVAQLAIKKKMKWQLLAEEMRILYVALTRAKEKLYIVCTAKDMEAKKKKWQEVAYTSTWELPAYVIEKAKSYADWIGYALARHQQGICSSATVLHDPSLWDIHIVPAHELEQEDAQANEHRDIVEAIQQLQPVAIKSEYEEEVNRRLFWTYTHAPATVLRAKQSVSELKRQRDIYGGHAEQPFRKELVERPRFLQAKMMTPAERGTMMHLVMQHVDVTKEVTVDAVREQIARMVNGEWLTEEQATVIDVESIVAFFNTPIGKRMQRATRLEREVPFYLAHEMEGETVVVQGVIDCVFEDEHGLVLIDYKTDRVSWMNDPKQQLKRRYKGQLALYREAIEAIWKREVTETYVYAFDGALLVPMEVD.

Positions 9–482 constitute a UvrD-like helicase ATP-binding domain; the sequence is SQWTDEQWQA…IDLAKNFRSR (474 aa). 30–37 provides a ligand contact to ATP; it reads AAAGSGKT. Positions 510-798 constitute a UvrD-like helicase C-terminal domain; that stretch reads AALRFGAQDY…RMMTIHKSKG (289 aa).

Belongs to the helicase family. AddA subfamily. In terms of assembly, heterodimer of AddA and AddB/RexB. Requires Mg(2+) as cofactor.

The catalysed reaction is Couples ATP hydrolysis with the unwinding of duplex DNA by translocating in the 3'-5' direction.. It catalyses the reaction ATP + H2O = ADP + phosphate + H(+). Functionally, the heterodimer acts as both an ATP-dependent DNA helicase and an ATP-dependent, dual-direction single-stranded exonuclease. Recognizes the chi site generating a DNA molecule suitable for the initiation of homologous recombination. The AddA nuclease domain is required for chi fragment generation; this subunit has the helicase and 3' -&gt; 5' nuclease activities. This chain is ATP-dependent helicase/nuclease subunit A, found in Anoxybacillus flavithermus (strain DSM 21510 / WK1).